Reading from the N-terminus, the 400-residue chain is MSALPVVVTLLLCGQLLAVEISSEATADSCPKAPEIANSHVEYSVRYQCDKYYKLRAGDGVYTFNNKQWINKDIGQQLPECEDASCPEPPKIENGYVEHSIRFQCKTYYKLRSAGDGVYTFNSKKQWINKNVGQQLPECEAVCGKPKHPVDQVQRIIGGSLDAKGSFPWQAKMVSHHNLISGATLINERWLLTTAKNLYLGHTSDKKAKDIAPTLRLYVGKNQPVEVEKVVLHPDRSKVDIGLIKLRQKVPVNEKVMPICLPSKDYVAVGRVGYVSGWGRNANFNFTEHLKYIMLPVADQDKCVEHYENSTVPENKTDKSPVGVQPILNKNTFCVGLSKYQEDTCYGDAGSAFVVHDQEDDTWYAAGILSFDKSCAVAEYGVYVKVTSILDWVRKTIADN.

A signal peptide spans 1-18 (MSALPVVVTLLLCGQLLA). 2 consecutive Sushi domains span residues 28–83 (DSCP…ECED) and 84–141 (ASCP…ECEA). Intrachain disulfides connect cysteine 49–cysteine 81, cysteine 105–cysteine 139, and cysteine 143–cysteine 260. The region spanning 156 to 398 (IIGGSLDAKG…ILDWVRKTIA (243 aa)) is the Peptidase S1 domain. 3 N-linked (GlcNAc...) asparagine glycosylation sites follow: asparagine 285, asparagine 309, and asparagine 315. Intrachain disulfides connect cysteine 303–cysteine 334 and cysteine 345–cysteine 375. The segment at 312 to 317 (VPENKT) is interaction with CD163.

It belongs to the peptidase S1 family. In terms of assembly, tetramer of two alpha and two beta chains; disulfide-linked. The hemoglobin/haptoglobin complex is composed of a haptoglobin dimer bound to two hemoglobin alpha-beta dimers. Interacts with CD163. Interacts with ERGIC3. As to expression, expressed by the liver and secreted in plasma.

It localises to the secreted. The protein localises to the extracellular space. Its function is as follows. As a result of hemolysis, hemoglobin is found to accumulate in the kidney and is secreted in the urine. Haptoglobin captures, and combines with free plasma hemoglobin to allow hepatic recycling of heme iron and to prevent kidney damage. Haptoglobin also acts as an antioxidant, has antibacterial activity and plays a role in modulating many aspects of the acute phase response. Hemoglobin/haptoglobin complexes are rapidly cleared by the macrophage CD163 scavenger receptor expressed on the surface of liver Kupfer cells through an endocytic lysosomal degradation pathway. This is Haptoglobin (HP) from Cervus elaphus (Red deer).